A 346-amino-acid chain; its full sequence is D-alanine--D-alanine ligase (346 aa).

The ATP-grasp domain maps to Lys-133–Glu-326. Tyr-159–Tyr-209 is an ATP binding site. The Mg(2+) site is built by Asp-282, Glu-294, and Asn-296.

Belongs to the D-alanine--D-alanine ligase family. Mg(2+) serves as cofactor. Mn(2+) is required as a cofactor.

The protein localises to the cytoplasm. It carries out the reaction 2 D-alanine + ATP = D-alanyl-D-alanine + ADP + phosphate + H(+). The protein operates within cell wall biogenesis; peptidoglycan biosynthesis. Functionally, cell wall formation. This is D-alanine--D-alanine ligase from Campylobacter concisus (strain 13826).